Consider the following 482-residue polypeptide: UDP-N-acetylmuramate--L-alanine ligase (482 aa).

129-135 (GTHGKTT) lines the ATP pocket.

This sequence belongs to the MurCDEF family.

It is found in the cytoplasm. The enzyme catalyses UDP-N-acetyl-alpha-D-muramate + L-alanine + ATP = UDP-N-acetyl-alpha-D-muramoyl-L-alanine + ADP + phosphate + H(+). Its pathway is cell wall biogenesis; peptidoglycan biosynthesis. Its function is as follows. Cell wall formation. The sequence is that of UDP-N-acetylmuramate--L-alanine ligase from Acinetobacter baumannii (strain AB307-0294).